Here is a 356-residue protein sequence, read N- to C-terminus: Peptidyl-prolyl isomerase CWC27 (356 aa).

The 201-residue stretch at 5-205 folds into the PPIase cyclophilin-type domain; the sequence is TTAKVVLTTT…KPKRKLQVNH (201 aa). Disordered stretches follow at residues 172-214, 234-266, and 279-331; these read KAGA…EEPV, NVAK…DAED, and LEKF…EDDD. Basic and acidic residues predominate over residues 181 to 192; that stretch reads AESRENKSGSRD. Residues 193–202 show a composition bias toward basic residues; that stretch reads RPKKPKRKLQ. A compositionally biased stretch (basic and acidic residues) spans 279 to 294; it reads LEKFRNMSRTKPDTKP.

This sequence belongs to the cyclophilin-type PPIase family. CWC27 subfamily. Associated with the spliceosome.

The protein resides in the cytoplasm. The protein localises to the nucleus. It carries out the reaction [protein]-peptidylproline (omega=180) = [protein]-peptidylproline (omega=0). PPIases accelerate the folding of proteins. It catalyzes the cis-trans isomerization of proline imidic peptide bonds in oligopeptides. Involved in pre-mRNA splicing. The chain is Peptidyl-prolyl isomerase CWC27 (CWC27) from Yarrowia lipolytica (strain CLIB 122 / E 150) (Yeast).